The sequence spans 269 residues: 3'(2'),5'-bisphosphate nucleotidase CysQ (269 aa).

5 residues coordinate Mg(2+): Glu-69, Asp-89, Leu-91, Asp-92, and Asp-216. Glu-69 is a substrate binding site. Substrate-binding positions include 91-94 (LDGT) and Asp-216.

It belongs to the inositol monophosphatase superfamily. CysQ family. Mg(2+) is required as a cofactor.

The protein localises to the cell inner membrane. The catalysed reaction is adenosine 3',5'-bisphosphate + H2O = AMP + phosphate. Its function is as follows. Converts adenosine-3',5'-bisphosphate (PAP) to AMP. The polypeptide is 3'(2'),5'-bisphosphate nucleotidase CysQ (Haemophilus influenzae (strain ATCC 51907 / DSM 11121 / KW20 / Rd)).